A 300-amino-acid polypeptide reads, in one-letter code: Lysenin-related protein 3 (300 aa).

The tract at residues 12-35 is N-terminal cap domain; that stretch reads EEIEVDVVAVWKEGYVYENRGDTS. The beta-hairpin domain stretch occupies residues 36-109; the sequence is VEQKITMTKG…SQVIEHTVTI (74 aa). An N-terminal cap domain region spans residues 110–158; that stretch reads PPTSKFTRWKLNADVGGTDIEYMYLIDEVTPISVTQTIPQVIRSRAKIL. The segment at 159–299 is C-terminal receptor-binding domain; the sequence is VGRQIHLGTT…EDKWILEVVN (141 aa). An N-(acyl)-sphingosylphosphocholine contacts are provided by Lys187, Ser229, Tyr235, and Tyr284. Cys274 and Cys285 form a disulfide bridge.

This sequence belongs to the lysenin family. As to quaternary structure, binds to sphingomyelin as a monomer by using its C-terminal domain. Forms a nonamer when sphingomyelin/LRP-3 ratio is lower than ca 500. Oligomerization, but not binding, is influenced by the fluidity of sphingomyelin. In terms of tissue distribution, expressed by coelomocytes.

It is found in the secreted. Its subcellular location is the target cell membrane. Functionally, pore-forming toxin that specifically binds sphingomyelin in the plasma membrane of various cells. Has antibacterial and hemolytic activity. The sequence is that of Lysenin-related protein 3 from Eisenia fetida (Red wiggler worm).